A 1104-amino-acid polypeptide reads, in one-letter code: MEELSGKPLSYAEKEKLKEKLAFLKKEYSRTLARLQRAKRAEKAKNSKKAIEDGVPQPEASSQLSHSESINKGFPCDTLQSNHLDEETGENISQILDVEPQSFNCKQGKEVLHTPRAGDIQGQLLHSTSSPDGKKEQNTLPGTTKTPWEKSSVSQEKEDYFDTNSLALLGKHRKGQESISRKNSRTPVSEKTHLLSLRSQIPDPPALVTGIGEGILIPPSGKSERGIDTLVRGNTVSAEAAVPSCTASNSNHSQHLEHTPPKSGCKITTQGPASSTNLVAQDQKMTIFTVNSVVYKAVRAHGQLPGSPNSCSVNDLTHSNLPANSTPNSKSLKSPSNTVDERNEPLQEDEILGPSKNFNLAAVSPPSTESQIHSCTMLEGLLFPAEYYVRTTRRMSDCQRKIALEAVIQSHLGVKKKELKKKTKATKAVVLSSEDTDQSESGMLDTSTGQSSSGSLSQKLLSPAEVSSPPGPAGKATTPPPGRGHRGKRKSARTSTLGHCQLLFPPCAALAVNRSKGKFTKHKCQNRGVVIHDFELPDEDFGLLKLEKLKSCSEKLIESPDSKNCGERLPREGNHAALEELQRDSETEGLEEELTVPPGEAYRPGPTLRRQPGSKDLSSSIVLFTPADTAAPNDSGRPPPSLCSPAFPILGMTPALGSQAAGETLSTEAAQPCSTSQPPLLGDTNSLVNNSKQCNSSACSPKPDTNLQASGRQGQPACDSDSGPQATPLPVESFTFRENQLCGNACLELHEHSTEQTETADRPACDNLNPGNLQLVSELKNPSSSCSVDVSAMWWERAGAKEPCIVTACEDVVSLWKPLNSLQWEKVHTWHFTEVPVLQIVPVPDVYNLICVALGSLEIREIRALLCSSGDDSEKQVLLKSGDIKAMLGLTKRRLVSSTGTFCNQQIQIMTFADDGSSKDEQLLMPPDETVLTFAEVQGTQEALLGTTTVNSIVIWNLKTGQLLKKMHIDDSYQASVCHGAYSEKGLLFVVVSQPCAKESQALGSPVFQLLVINPKTAQSVGVLLCSLPQGQAGRFLEGDVKDHVAAAVLTSGTIAIWDLLLGHCTALLPPVSDQSWSLVKWSGTDSHLLAGQKDGNIFIYRYF.

Positions M1–K157 are required for its oligomerization and is important for its focal concentration at DNA damage sites. Positions M1–L195 are interaction with RAD51. The interval M1 to P308 is interaction with BRCA1. Residues L9–K48 are a coiled coil. Residues K39 to E52 show a composition bias toward basic and acidic residues. Disordered stretches follow at residues K39 to N91, G122 to K157, and P243 to P272. Composition is skewed to polar residues over residues E59–I70 and N138–S154. S274 bears the Phosphoserine mark. The segment at L304–P354 is disordered. Positions G306 to T338 are enriched in polar residues. S364 is subject to Phosphoserine. A chAM (Chromatin-association motif); required for chromatin association, mediates nucleosome association region spans residues S374–K424. Disordered stretches follow at residues K417–T494 and L581–P730. Phosphoserine is present on S432. Low complexity predominate over residues T446–S462. The span at R483–A492 shows a compositional bias: basic residues. The segment covering T664–Q713 has biased composition (polar residues). Residues Q693–F1104 form a required for interaction with POLH and POLH DNA synthesis stimulation region. The tract at residues G771–F1104 is interaction with RAD51 and BRCA2. Positions G771–F1104 are interaction with RAD51, BRCA2 and POLH. WD repeat units follow at residues N772–T833, V835–L879, K880–P927, D928–D970, S976–S1027, A1033–P1071, and S1073–F1104.

As to quaternary structure, homooligomer; dissociated upon DNA damage thus allowing association with BRCA1. Oligomerization is essential for its focal accumulation at DNA breaks. Part of a BRCA complex containing BRCA1, BRCA2 and PALB2. Interacts with BRCA1 and this interaction is essential for its function in HRR. Interacts with RAD51AP1 and MORF4L1/MRG15. Component of the homologous recombination repair (HR) complex composed of ERCC5/XPG, BRCA2, PALB2, DSS1 and RAD51. Within the complex, interacts with ERCC5/XPG and BRCA2. Interacts with BRCA2, RAD51C, RAD51 and XRCC3; the interactions are direct and it may serve as a scaffold for a HR complex containing PALB2, BRCA2, RAD51C, RAD51 and XRCC3. Interacts with POLH; the interaction is direct.

It is found in the nucleus. Its function is as follows. Plays a critical role in homologous recombination repair (HRR) through its ability to recruit BRCA2 and RAD51 to DNA breaks. Strongly stimulates the DNA strand-invasion activity of RAD51, stabilizes the nucleoprotein filament against a disruptive BRC3-BRC4 polypeptide and helps RAD51 to overcome the suppressive effect of replication protein A (RPA). Functionally cooperates with RAD51AP1 in promoting of D-loop formation by RAD51. Serves as the molecular scaffold in the formation of the BRCA1-PALB2-BRCA2 complex which is essential for homologous recombination. Via its WD repeats is proposed to scaffold a HR complex containing RAD51C and BRCA2 which is thought to play a role in HR-mediated DNA repair. Essential partner of BRCA2 that promotes the localization and stability of BRCA2. Also enables its recombinational repair and checkpoint functions of BRCA2. May act by promoting stable association of BRCA2 with nuclear structures, allowing BRCA2 to escape the effects of proteasome-mediated degradation. Binds DNA with high affinity for D loop, which comprises single-stranded, double-stranded and branched DNA structures. May play a role in the extension step after strand invasion at replication-dependent DNA double-strand breaks; together with BRCA2 is involved in both POLH localization at collapsed replication forks and DNA polymerization activity. This chain is Partner and localizer of BRCA2 (Palb2), found in Mus musculus (Mouse).